Here is a 1279-residue protein sequence, read N- to C-terminus: Maestro heat-like repeat-containing protein family member 7 (1279 aa).

Positions 1 to 145 are disordered; it reads MALSRGTSLI…NSSRPCSEDV (145 aa). Positions 39–61 are enriched in low complexity; the sequence is PDLALAPPPEHALALTPALHPAL. 2 stretches are compositionally biased toward polar residues: residues 71-106 and 124-140; these read PVSNDIPSHNASGATTPSSTQINTVDTADQGLNHTS and PSSTQANVLSPENSSRP. Asn200, Asn210, Asn255, Asn267, and Asn296 each carry an N-linked (GlcNAc...) asparagine glycan. Phosphoserine is present on Ser356. N-linked (GlcNAc...) asparagine glycosylation is present at Asn541. Transmembrane regions (helical) follow at residues 548-568 and 722-742; these read TLVTLPFLISSGFPTLGLLLG and LLPISFLASSFMTEVVVALLM. HEAT repeat units follow at residues 913 to 950, 992 to 1029, 1035 to 1072, and 1080 to 1117; these read QELCRILYLLIPLLERGDERHKITATAFFVELFRMEQV, AKVQSLLPSMVKSLKNMDGMLVVEAVHDLKRIFKGQGK, AVYVEMLQILLPHFTDAREMVRASCINVYGKVVKKLQT, and EQLTSTLMPLLFIIQEGNAKVSQKCVKTLVCCSSFMNW.

It is found in the membrane. The sequence is that of Maestro heat-like repeat-containing protein family member 7 (Mroh7) from Mus musculus (Mouse).